Reading from the N-terminus, the 206-residue chain is N-(5'-phosphoribosyl)anthranilate isomerase (206 aa).

This sequence belongs to the TrpF family.

It carries out the reaction N-(5-phospho-beta-D-ribosyl)anthranilate = 1-(2-carboxyphenylamino)-1-deoxy-D-ribulose 5-phosphate. Its pathway is amino-acid biosynthesis; L-tryptophan biosynthesis; L-tryptophan from chorismate: step 3/5. The sequence is that of N-(5'-phosphoribosyl)anthranilate isomerase from Pseudomonas putida (strain GB-1).